A 661-amino-acid chain; its full sequence is Phospholipid:diacylglycerol acyltransferase (661 aa).

The interval 1–71 (MGTLFRRNVQ…FDRKRDGNGR (71 aa)) is disordered. Topologically, residues 1–80 (MGTLFRRNVQ…RKRWRDSRRL (80 aa)) are cytoplasmic. The segment covering 34-48 (HIHHQQGLGHKRRRG) has biased composition (basic residues). 2 short sequence motifs (bipartite nuclear localization signal) span residues 43-50 (HKRRRGIS) and 64-71 (RKRDGNGR). A compositionally biased stretch (basic and acidic residues) spans 54 to 70 (KRNERGKDFDRKRDGNG). The chain crosses the membrane as a helical span at residues 81-101 (IFILGAFLGVLLPFSFGAYHV). The Lumenal segment spans residues 102-661 (HNSDSDLFDN…QWVSQMPFPM (560 aa)). Glutamine 162 provides a ligand contact to substrate. A GHSXG lipase motif motif is present at residues 322–326 (GHSMG). Serine 324 functions as the Acyl-ester intermediate in the catalytic mechanism. Methionine 325 is a binding site for substrate. Residues asparagine 453, asparagine 461, and asparagine 469 are each glycosylated (N-linked (GlcNAc...) asparagine). The active-site Charge relay system is aspartate 567. A glycan (N-linked (GlcNAc...) asparagine) is linked at asparagine 594. The Charge relay system role is filled by histidine 618.

It belongs to the AB hydrolase superfamily. Lipase family.

The protein localises to the endoplasmic reticulum membrane. It is found in the nucleus inner membrane. The catalysed reaction is a glycerophospholipid + a 1,2-diacyl-sn-glycerol = a monoacylglycerophospholipid + a triacyl-sn-glycerol. It catalyses the reaction a 1-acyl-sn-glycerol + a 1,2-diacyl-sn-glycero-3-phosphocholine = a 1-acyl-sn-glycero-3-phosphocholine + a 1,2-diacyl-sn-glycerol. It carries out the reaction 1,2-di-(9Z-octadecenoyl)-sn-glycero-3-phosphoethanolamine + 1,2-di-(9Z-octadecenoyl)-sn-glycerol = 1-(9Z-octadecenoyl)-sn-glycero-3-phosphoethanolamine + 1,2,3-tri-(9Z-octadecenoyl)-glycerol. The enzyme catalyses 1,2-di-(9Z-octadecenoyl)-sn-glycerol + 1,2-di-(9Z-octadecenoyl)-sn-glycero-3-phosphocholine = 1,2,3-tri-(9Z-octadecenoyl)-glycerol + 1-(9Z-octadecenoyl)-sn-glycero-3-phosphocholine. The catalysed reaction is 1-(9Z-octadecenoyl)-sn-glycerol + 1,2-di-(9Z-octadecenoyl)-sn-glycero-3-phosphocholine = di-(9Z)-octadecenoylglycerol + 1-(9Z-octadecenoyl)-sn-glycero-3-phosphocholine. It catalyses the reaction 2-(9Z-octadecenoyl)-glycerol + 1,2-di-(9Z-octadecenoyl)-sn-glycero-3-phosphocholine = 1,2-di-(9Z-octadecenoyl)-glycerol + 1-(9Z-octadecenoyl)-sn-glycero-3-phosphocholine. It carries out the reaction 1-(9Z-octadecenoyl)-2-hexadecanoyl-sn-glycero-3-phosphoethanolamine + 1,2-di-(9Z-octadecenoyl)-sn-glycerol = 1,2-di-(9Z)-octadecenoyl-3-hexadecanoyl-sn-glycerol + 1-(9Z-octadecenoyl)-sn-glycero-3-phosphoethanolamine. The enzyme catalyses 1-(9Z-octadecenoyl)-2-octadecanoyl-sn-glycero-3-phosphoethanolamine + 1,2-di-(9Z-octadecenoyl)-sn-glycerol = 1,2-di-(9Z)-octadecenoyl-3-octadecanoyl-sn-glycerol + 1-(9Z-octadecenoyl)-sn-glycero-3-phosphoethanolamine. The catalysed reaction is 1-(9Z)-octadecenoyl-2-(9Z,12Z)-octadecadienoyl-sn-glycero-3-phosphoethanolamine + 1,2-di-(9Z-octadecenoyl)-sn-glycerol = 1,2-di-(9Z)-octadecenoyl-3-(9Z,12Z)-octadecadienoyl-sn-glycerol + 1-(9Z-octadecenoyl)-sn-glycero-3-phosphoethanolamine. Functionally, catalyzes triacylglycerol (TAG) formation by an acyl-CoA independent pathway. The enzyme specifically transfers acyl groups from the sn-2 position of a phospholipid to diacylglycerol (DAG), thus forming an sn-1-lysophospholipid. The preferred acyl donors are phosphatidylethanolamine (PE) and phosphatidylcholine (PC). Also capable of using broad acyl donors such as phosphatidic acid (PA), phosphatidylserine (PS), phosphatidylglycerol (PG) and phosphatidylinositol (PI), as well as monogalactosyldiacylglycerol (MGDG), digalactosyldiacylglycerol (DGDG), and acyl-CoA, and it is more likely to use unsaturated acyl donors. As acyl acceptors, it prefers 1,2- over 1,3-diacylglycerol (DAG). Additionally, has esterification activity that can utilize methanol as acyl acceptor to generate fatty acid methyl esters (FAME). Can also utilize ceramide instead of DAG, acylating the ceramides by attaching a fatty acid to the hydroxy group on the first carbon atom of the long-chain base to produce 1-O-acylceramides. Involved in lipid particle synthesis from the endoplasmic reticulum, promoting localized TAG production at discrete ER subdomains. Relocates from the endoplasmic reticulum to a subdomain of the inner nuclear membrane upon nutrient starvation, where it provides a site of TAG synthesis, which is coupled with nuclear membrane remodeling. This Saccharomyces cerevisiae (strain ATCC 204508 / S288c) (Baker's yeast) protein is Phospholipid:diacylglycerol acyltransferase.